The primary structure comprises 545 residues: Cryptochrome-1 (545 aa).

Residues 3–140 (INNILWFRHG…RCVENVSHTL (138 aa)) enclose the Photolyase/cryptochrome alpha/beta domain. FAD-binding positions include arginine 237, serine 265, serine 267, glutamine 308, histidine 375, 407-409 (DAD), cysteine 413, and asparagine 416.

This sequence belongs to the DNA photolyase class-1 family. As to quaternary structure, interacts with tim and per; promoted by light conditions. FAD serves as cofactor.

It is found in the cytoplasm. Its subcellular location is the perinuclear region. The protein localises to the nucleus. Blue light-dependent regulator that is the input of the circadian feedback loop. Has no photolyase activity for cyclobutane pyrimidine dimers or 6-4 photoproducts. Regulation of expression by light suggests a role in photoreception for locomotor activity rhythms. Functions, together with per, as a transcriptional repressor required for the oscillation of peripheral circadian clocks and for the correct specification of clock cells. Genes directly activated by the transcription factors Clock (Clk) and cycle (cyc) are repressed by cry. This is Cryptochrome-1 from Anopheles gambiae (African malaria mosquito).